Reading from the N-terminus, the 105-residue chain is UPF0473 protein SAK_2028 (105 aa).

It belongs to the UPF0473 family.

The chain is UPF0473 protein SAK_2028 from Streptococcus agalactiae serotype Ia (strain ATCC 27591 / A909 / CDC SS700).